The sequence spans 552 residues: HTH-type transcriptional regulator SgrR (552 aa).

The 116-residue stretch at 1-116 folds into the HTH marR-type domain; the sequence is MPSGRLQQQF…LISHLGRSFR (116 aa). A DNA-binding region (H-T-H motif) is located at residues 26-49; sequence LNELADLLNCSRRHMRTLLNTMQA. Residues 163-493 form a solute-binding region; that stretch reads ELEADIAHHW…RDWQDDAAQW (331 aa).

Functionally, activates the small RNA gene sgrS under glucose-phosphate stress conditions as well as yfdZ. Represses its own transcription under both stress and non-stress conditions. Might act as a sensor of the intracellular accumulation of phosphoglucose by binding these molecules in its C-terminal solute-binding domain. The chain is HTH-type transcriptional regulator SgrR from Salmonella choleraesuis (strain SC-B67).